We begin with the raw amino-acid sequence, 219 residues long: Histone H1.4 (219 aa).

Residues Met-1–Ala-15 are compositionally biased toward low complexity. The disordered stretch occupies residues Met-1 to Ser-41. Position 2 is an N-acetylserine (Ser-2). Ser-2 is modified (phosphoserine). Position 17 is an N6-acetyllysine (Lys-17). The residue at position 18 (Thr-18) is a Phosphothreonine. Over residues Val-20–Ala-35 the composition is skewed to basic residues. Lys-26 carries the N6-acetyllysine; alternate modification. Position 26 is an N6-methyllysine; alternate (Lys-26). Position 34 is an N6-(beta-hydroxybutyryl)lysine; alternate (Lys-34). N6-succinyllysine; alternate is present on Lys-34. Residue Ser-36 is modified to Phosphoserine. In terms of domain architecture, H15 spans Ser-36 to Lys-109. Lys-52 carries the N6-(beta-hydroxybutyryl)lysine modification. A Citrulline modification is found at Arg-54. An N6-(beta-hydroxybutyryl)lysine mark is found at Lys-64, Lys-85, Lys-90, and Lys-106. The disordered stretch occupies residues Gly-91 to Lys-219. A compositionally biased stretch (basic residues) spans Lys-119–Lys-140. The residue at position 146 (Thr-146) is a Phosphothreonine. Composition is skewed to basic residues over residues Lys-149–Lys-160 and Lys-168–Pro-185. Ser-187 bears the Phosphoserine mark. The span at Lys-192–Lys-219 shows a compositional bias: basic residues.

The protein belongs to the histone H1/H5 family. In terms of processing, H1 histones are progressively phosphorylated during the cell cycle, becoming maximally phosphorylated during late G2 phase and M phase, and being dephosphorylated sharply thereafter. Acetylated at Lys-26. Deacetylated at Lys-26 by SIRT1. Post-translationally, citrullination at Arg-54 (H1R54ci) by PADI4 takes place within the DNA-binding site of H1 and results in its displacement from chromatin and global chromatin decondensation, thereby promoting pluripotency and stem cell maintenance.

The protein resides in the nucleus. Its subcellular location is the chromosome. Functionally, histone H1 protein binds to linker DNA between nucleosomes forming the macromolecular structure known as the chromatin fiber. Histones H1 are necessary for the condensation of nucleosome chains into higher-order structured fibers. Also acts as a regulator of individual gene transcription through chromatin remodeling, nucleosome spacing and DNA methylation. This is Histone H1.4 from Oryctolagus cuniculus (Rabbit).